The sequence spans 389 residues: MVTVNEFRKAQRAEGPATVLAIGTATPPNCVDQSAYADYYFRITNSEDKPELKEKFRRMCEKSMINTRYMHLTEDLLKQNPSFCEYMASSLDARQDIVVNEVPKLGKEAALRAIKEWGQPKSKITHLIFCTTSGVDMPGADFRLTKLLGLRPSVKRFMMYQQGCFAGGTVLRLAKDLAENNKNARVLVVCSEITVITFRGPNDTHLDSLVGQALFGDGAGAVIVGSDPVIGIEKPLFEIVSAAQTILPDSDGAIDGHLREVGLTFHLLKDVPGLISKNIRKSLVEAFKPLGISDWNSIFWIAHPGGPAILDQVETELSLKPEKLKSTRQVLRDYGNMSSACVLFILDEMRKASAKDGHRTTGEGLDWGVLFGFGPGLTVETVVLHSVPP.

The active site involves C164.

The protein belongs to the thiolase-like superfamily. Chalcone/stilbene synthases family.

It catalyses the reaction (E)-4-coumaroyl-CoA + 3 malonyl-CoA + 3 H(+) = 2',4,4',6'-tetrahydroxychalcone + 3 CO2 + 4 CoA. The protein operates within secondary metabolite biosynthesis; flavonoid biosynthesis. The primary product of this enzyme is 4,2',4',6'-tetrahydroxychalcone (also termed naringenin-chalcone or chalcone) which can under specific conditions spontaneously isomerize into naringenin. The polypeptide is Chalcone synthase 1 (CHS1) (Daucus carota (Wild carrot)).